Consider the following 603-residue polypeptide: MARPLRAARLPPPLLLLLAAGASLGAYAVGVDEPGPEGLTSTSLLDLLLPTDFEPLDSEEPSEAMGLDAGLAPGSGFPSEDSEESRLLQPPQYFWEEEELNGSSLDLGPTADYVFPDLTEKVASMEDPGQAPDLPNLPSILPKMDLAEPPWHMPLQEEEEEEEEEEEEREEEEREKEAEEEEEEEELLPVSGSPGATAQAHAPSPSTSSSTSSQSPGATRHRQEDSGDQATSGMEVESSVKPTLSVPSVTPSTVAPGVQNYSQESGGTEWPTGGLGVQSEVPQGAGEGATVGAADFDGQQGALPSSSLPQTVPPSGTEVPSEGPLYPRIPDSLPPGPQDTESTPSSATWGQEGLSEQPLEGQAAEAHSLTPWDSTQVICKDWSNLAGKSYIILNMTQNIDCEVFRRHRGLRLLALVEEVLPRHRSGHRGDWHISLSKPSEKEQHLLMTLVGEQGVVPTQDVLSMLSGIRRSLEEIGIQNYSTTSSCQARATQVRSDYGTLFVVLVIIGVICFIIIVLGLLYNCWQRRMPKLKHVSHGEELRFVENGCHDNPTLDVASDSQSEMQEKQPSLNGGAINGPSSWSALMGSKRDPEDSDVFEEDTHL.

An N-terminal signal peptide occupies residues 1–28 (MARPLRAARLPPPLLLLLAAGASLGAYA). Over 29-499 (VGVDEPGPEG…ATQVRSDYGT (471 aa)) the chain is Extracellular. Residues 53–92 (FEPLDSEEPSEAMGLDAGLAPGSGFPSEDSEESRLLQPPQ) form a disordered region. O-linked (Xyl...) (chondroitin sulfate) serine glycosylation occurs at S75. Sulfotyrosine is present on Y93. An N-linked (GlcNAc...) asparagine glycan is attached at N101. Position 113 is a sulfotyrosine (Y113). Positions 124–368 (SMEDPGQAPD…LEGQAAEAHS (245 aa)) are disordered. The segment covering 156–187 (QEEEEEEEEEEEEREEEEREKEAEEEEEEEEL) has biased composition (acidic residues). A compositionally biased stretch (low complexity) spans 196 to 216 (ATAQAHAPSPSTSSSTSSQSP). 3 stretches are compositionally biased toward polar residues: residues 240 to 266 (VKPT…QESG), 302 to 314 (ALPS…TVPP), and 339 to 349 (DTESTPSSATW). The N-linked (GlcNAc...) asparagine glycan is linked to N260. An N-linked (GlcNAc...) asparagine glycan is attached at N394. A helical membrane pass occupies residues 500–520 (LFVVLVIIGVICFIIIVLGLL). The Cytoplasmic segment spans residues 521-603 (YNCWQRRMPK…SDVFEEDTHL (83 aa)). The segment covering 558 to 570 (DSQSEMQEKQPSL) has biased composition (polar residues). The interval 558–603 (DSQSEMQEKQPSLNGGAINGPSSWSALMGSKRDPEDSDVFEEDTHL) is disordered. S569 and S594 each carry phosphoserine. Over residues 592-603 (EDSDVFEEDTHL) the composition is skewed to acidic residues.

This sequence belongs to the podocalyxin family. In terms of assembly, homodimer; disulfide-linked. Interacts with SELL, SELE and SELP. Glycosylated; contains chondroitin sulfate. Displays sialylated O-linked oligosaccharides. In terms of processing, sulfation is necessary for interaction with SELL. Sialylated O-linked oligosaccharides are necessary for interaction with SELL, SELE and SELP.

The protein resides in the membrane. Acts as a ligand for vascular selectins. Mediates rapid rolling of leukocytes over vascular surfaces through high affinity divalent cation-dependent interactions with E-, P- and L-selectins. This chain is Podocalyxin-like protein 2 (Podxl2), found in Mus musculus (Mouse).